A 214-amino-acid chain; its full sequence is Outer-membrane lipoprotein LolB (214 aa).

The N-terminal stretch at 1-25 (MNNLKRLTKTIFSCFTLSALLLLAG) is a signal peptide. Residue cysteine 26 is the site of N-palmitoyl cysteine attachment. Cysteine 26 carries the S-diacylglycerol cysteine lipid modification.

The protein belongs to the LolB family. Monomer.

It is found in the cell outer membrane. Functionally, plays a critical role in the incorporation of lipoproteins in the outer membrane after they are released by the LolA protein. The chain is Outer-membrane lipoprotein LolB from Shewanella baltica (strain OS155 / ATCC BAA-1091).